An 82-amino-acid chain; its full sequence is Small ribosomal subunit protein uS17 (82 aa).

It belongs to the universal ribosomal protein uS17 family. In terms of assembly, part of the 30S ribosomal subunit.

Its function is as follows. One of the primary rRNA binding proteins, it binds specifically to the 5'-end of 16S ribosomal RNA. This chain is Small ribosomal subunit protein uS17, found in Shewanella sp. (strain MR-7).